The following is a 408-amino-acid chain: Cytochrome bc1 complex Rieske iron-sulfur subunit (408 aa).

A run of 3 helical transmembrane segments spans residues 56–76, 98–118, and 166–186; these read VGIW…TYIF, MLGI…VLYV, and LLAG…GGMI. The 98-residue stretch at 293 to 390 folds into the Rieske domain; that stretch reads HGPRNAVMLI…ITVDEEGYLI (98 aa). 4 residues coordinate [2Fe-2S] cluster: C333, H335, C352, and H355. A disulfide bridge connects residues C338 and C354.

The protein belongs to the Rieske iron-sulfur protein family. In terms of assembly, the cytochrome bc1 complex is composed of a cytochrome b (QcrB), the Rieske iron-sulfur protein (QcrA) and a diheme cytochrome c (QcrC) subunit. The bc1 complex forms a supercomplex with cytochrome c oxidase (cytochrome aa3). The cofactor is [2Fe-2S] cluster.

The protein resides in the cell membrane. Functionally, iron-sulfur subunit of the cytochrome bc1 complex, an essential component of the respiratory electron transport chain required for ATP synthesis. The bc1 complex catalyzes the oxidation of menaquinol and the reduction of cytochrome c in the respiratory chain. The bc1 complex operates through a Q-cycle mechanism that couples electron transfer to generation of the proton gradient that drives ATP synthesis. This chain is Cytochrome bc1 complex Rieske iron-sulfur subunit (qcrA), found in Corynebacterium efficiens (strain DSM 44549 / YS-314 / AJ 12310 / JCM 11189 / NBRC 100395).